Here is a 942-residue protein sequence, read N- to C-terminus: AP-1 complex subunit beta (942 aa).

6 HEAT repeats span residues 45–82 (KDVS…NHPD), 117–154 (NITE…VNPE), 156–193 (VENQ…VSKK), 273–313 (DVIR…KRPE), 384–421 (RASE…KYPN), and 458–495 (DNAH…KRPK). The tract at residues 590–700 (GLRNKEEEDE…NDLSFLGGGG (111 aa)) is disordered. The segment covering 596–609 (EEDEEEPDYVDDDN) has biased composition (acidic residues). Low complexity-rich tracts occupy residues 613–645 (QQGG…QQQP) and 664–677 (NNNN…NNNN). The span at 678–693 (MYSPQPQQFNGNSNDL) shows a compositional bias: polar residues.

This sequence belongs to the adaptor complexes large subunit family. In terms of assembly, adaptor protein complex 1 (AP-1) is a heterotetramer composed of two large adaptins (gamma-type subunit and beta-type subunit), a medium adaptin (mu-type subunit) and a small adaptin (sigma-type subunit).

Its subcellular location is the golgi apparatus. The protein localises to the trans-Golgi network. It is found in the cytoplasmic vesicle. The protein resides in the clathrin-coated vesicle membrane. Its function is as follows. Subunit of clathrin-associated adaptor protein complex 1 that plays a role in protein sorting in the trans-Golgi network (TGN) and endosomes. The AP complexes mediate the recruitment of clathrin to membranes and the recognition of sorting signals within the cytosolic tails of transmembrane cargo molecules. Also involved in early steps of phagocytosis and macropinocytosis. This is AP-1 complex subunit beta (ap1b1) from Dictyostelium discoideum (Social amoeba).